The primary structure comprises 246 residues: Uridylate kinase (246 aa).

Position 18-21 (18-21 (KVSG)) interacts with ATP. G60 contacts UMP. G61 and R65 together coordinate ATP. UMP is bound by residues D80 and 141–148 (TGNPFFTT). ATP is bound by residues T168, Q169, Y174, and D177.

The protein belongs to the UMP kinase family. Homohexamer.

It localises to the cytoplasm. The catalysed reaction is UMP + ATP = UDP + ADP. It participates in pyrimidine metabolism; CTP biosynthesis via de novo pathway; UDP from UMP (UMPK route): step 1/1. Inhibited by UTP. Functionally, catalyzes the reversible phosphorylation of UMP to UDP. This Granulibacter bethesdensis (strain ATCC BAA-1260 / CGDNIH1) protein is Uridylate kinase.